The following is a 172-amino-acid chain: Interferon tau-2 (172 aa).

2 disulfide bridges follow: Cys1/Cys99 and Cys29/Cys139. N-linked (GlcNAc...) asparagine glycosylation occurs at Asn78.

This sequence belongs to the alpha/beta interferon family. IFN-alphaII subfamily. In terms of tissue distribution, constitutively and exclusively expressed in the mononuclear cells of the extraembryonic trophectoderm.

Its subcellular location is the secreted. Paracrine hormone primarily responsible for maternal recognition of pregnancy. Interacts with endometrial receptors, probably type I interferon receptors, and blocks estrogen receptor expression, preventing the estrogen-induced increase in oxytocin receptor expression in the endometrium. This results in the suppression of the pulsatile endometrial release of the luteolytic hormone prostaglandin F2-alpha, hindering the regression of the corpus luteum (luteolysis) and therefore a return to ovarian cyclicity. This, and a possible direct effect of IFN-tau on prostaglandin synthesis, leads in turn to continued ovarian progesterone secretion, which stimulates the secretion by the endometrium of the nutrients required for the growth of the conceptus. In summary, displays particularly high antiviral and antiproliferative potency concurrently with particular weak cytotoxicity, high antiluteolytic activity and immunomodulatory properties. In contrast with other IFNs, IFN-tau is not virally inducible. The sequence is that of Interferon tau-2 (IFNT2) from Bos taurus (Bovine).